The primary structure comprises 379 residues: Chaperone protein DnaJ (379 aa).

Residues 5–70 (DYYEVLGVSR…QKRAAYDQYG (66 aa)) form the J domain. A CR-type zinc finger spans residues 134 to 212 (GVTKEIRIPT…CHGHGRVEKS (79 aa)). Residues cysteine 147, cysteine 150, cysteine 164, cysteine 167, cysteine 186, cysteine 189, cysteine 200, and cysteine 203 each coordinate Zn(2+). 4 CXXCXGXG motif repeats span residues 147 to 154 (CDVCHGSG), 164 to 171 (CPTCHGAG), 186 to 193 (CPHCHGRG), and 200 to 207 (CNKCHGHG).

The protein belongs to the DnaJ family. In terms of assembly, homodimer. The cofactor is Zn(2+).

The protein localises to the cytoplasm. Participates actively in the response to hyperosmotic and heat shock by preventing the aggregation of stress-denatured proteins and by disaggregating proteins, also in an autonomous, DnaK-independent fashion. Unfolded proteins bind initially to DnaJ; upon interaction with the DnaJ-bound protein, DnaK hydrolyzes its bound ATP, resulting in the formation of a stable complex. GrpE releases ADP from DnaK; ATP binding to DnaK triggers the release of the substrate protein, thus completing the reaction cycle. Several rounds of ATP-dependent interactions between DnaJ, DnaK and GrpE are required for fully efficient folding. Also involved, together with DnaK and GrpE, in the DNA replication of plasmids through activation of initiation proteins. This Yersinia pestis bv. Antiqua (strain Antiqua) protein is Chaperone protein DnaJ.